Here is a 528-residue protein sequence, read N- to C-terminus: Putative ABC transporter ATP-binding protein MA_1418 (528 aa).

ABC transporter domains are found at residues 2 to 242 (IELR…TNLT) and 262 to 494 (ISVK…SDYK). Residues 36-43 (GHSAAGKT) and 294-301 (GENGSGKT) contribute to the ATP site.

Belongs to the ABC transporter superfamily.

The protein localises to the cell membrane. Its function is as follows. Probably part of an ABC transporter complex. Responsible for energy coupling to the transport system. In Methanosarcina acetivorans (strain ATCC 35395 / DSM 2834 / JCM 12185 / C2A), this protein is Putative ABC transporter ATP-binding protein MA_1418.